A 397-amino-acid polypeptide reads, in one-letter code: MVKETQYYDILGVKPSASPEEIKKAYRKLALKYHPDKNPDEGEKFKLISQAYEVLSDPKKRDVYDQGGEQAIKEGGSGSPSFSSPMDIFDMFFGGGGRMARERRGKNVVHQLSVTLEDLYNGVTKKLALQKNVICEKCEGVGGKKGSVEKCPLCKGRGMQIHIQQIGPGMVQQIQTVCIECKGQGERINPKDRCESCSGAKVIREKKIIEVHVEKGMKDGQKILFHGEGDQEPELEPGDVIIVLDQKDHSVFQRRGHDLIMKMKIQLSEALCGFKKTIKTLDNRILVITSKAGEVIKHGDLRCVRDEGMPIYKAPLEKGILIIQFLVIFPEKHWLSLEKLPQLEALLPPRQKVRITDDMDQVELKEFCPNEQNWRQHREAYEEDEDGPQAGVQCQTA.

Positions 4–70 (ETQYYDILGV…RDVYDQGGEQ (67 aa)) constitute a J domain. Position 18 is a phosphoserine (Ser-18). The CR-type zinc-finger motif lies at 122-206 (GVTKKLALQK…CSGAKVIREK (85 aa)). Residues Cys-135, Cys-138, Cys-151, Cys-154, Cys-178, Cys-181, Cys-194, and Cys-197 each coordinate Zn(2+). CXXCXGXG motif repeat units lie at residues 135 to 142 (CEKCEGVG), 151 to 158 (CPLCKGRG), 178 to 185 (CIECKGQG), and 194 to 201 (CESCSGAK). A Cysteine methyl ester modification is found at Cys-394. Cys-394 carries S-farnesyl cysteine lipidation. Residues 395-397 (QTA) constitute a propeptide, removed in mature form.

The protein resides in the membrane. This chain is DnaJ homolog subfamily A member 4 (DNAJA4), found in Homo sapiens (Human).